Consider the following 83-residue polypeptide: Mu-theraphotoxin-Hhn2f (83 aa).

The signal sequence occupies residues 1 to 21 (MKASMFLALAGLVLLFVVGYA). A propeptide spanning residues 22 to 48 (SESEEKEFPIELLSKIFAVDVFKGEER) is cleaved from the precursor. 3 cysteine pairs are disulfide-bonded: cysteine 50–cysteine 65, cysteine 57–cysteine 70, and cysteine 64–cysteine 77. Position 81 is a leucine amide (leucine 81).

The protein belongs to the neurotoxin 10 (Hwtx-1) family. 15 (Hntx-3) subfamily. Monomer. As to expression, expressed by the venom gland.

The protein localises to the secreted. Lethal neurotoxin. Selectively blocks tetrodotoxin-sensitive voltage-gated sodium channels (Nav). Does not affect tetrodotoxin-resistant voltage-gated sodium channels or calcium channels. The sequence is that of Mu-theraphotoxin-Hhn2f from Cyriopagopus hainanus (Chinese bird spider).